A 265-amino-acid polypeptide reads, in one-letter code: MIKLQKLKLYGFNNLTKSLSFCIYDICYANTNDSRNSYISYIDEQYNAIRLTKILKKTCSIIGANVLNIFHQDYEPQGASVTILVCEEPMSMEKIDALNKNIVSSSVLAHLDKSHICVHTYPESHPQSGICTFRADIEVSTCGIISPLNALNYLIHQLESDIVTIEYRVRGFTRDIHGIKHFIDHKINSIQNFMSDDIKSMYDMVDVNVYQENIFHTRMLLREFNLKNYLFNINLENLEKEERSYIMKLLSKEMREIYYGRNISR.

S114 serves as the catalytic Schiff-base intermediate with substrate; via pyruvic acid. S114 carries the pyruvic acid (Ser); by autocatalysis modification. H119 serves as the catalytic Proton acceptor; for processing activity. C142 acts as the Proton donor; for catalytic activity in catalysis.

This sequence belongs to the prokaryotic AdoMetDC family. Type 2 subfamily. As to quaternary structure, heterooctamer of four alpha and four beta chains arranged as a tetramer of alpha/beta heterodimers. Requires pyruvate as cofactor. Is synthesized initially as an inactive proenzyme. Formation of the active enzyme involves a self-maturation process in which the active site pyruvoyl group is generated from an internal serine residue via an autocatalytic post-translational modification. Two non-identical subunits are generated from the proenzyme in this reaction, and the pyruvate is formed at the N-terminus of the alpha chain, which is derived from the carboxyl end of the proenzyme. The post-translation cleavage follows an unusual pathway, termed non-hydrolytic serinolysis, in which the side chain hydroxyl group of the serine supplies its oxygen atom to form the C-terminus of the beta chain, while the remainder of the serine residue undergoes an oxidative deamination to produce ammonia and the pyruvoyl group blocking the N-terminus of the alpha chain.

It catalyses the reaction S-adenosyl-L-methionine + H(+) = S-adenosyl 3-(methylsulfanyl)propylamine + CO2. It participates in amine and polyamine biosynthesis; S-adenosylmethioninamine biosynthesis; S-adenosylmethioninamine from S-adenosyl-L-methionine: step 1/1. Functionally, catalyzes the decarboxylation of S-adenosylmethionine to S-adenosylmethioninamine (dcAdoMet), the propylamine donor required for the synthesis of the polyamines spermine and spermidine from the diamine putrescine. This chain is S-adenosylmethionine decarboxylase proenzyme, found in Buchnera aphidicola subsp. Acyrthosiphon pisum (strain 5A).